The primary structure comprises 1043 residues: Protein SLOW WALKER 2 (1043 aa).

Disordered regions lie at residues Ser-32–Asp-113, Gln-444–Asp-469, Asp-632–Asp-737, and Ser-861–Glu-1043. The short motif at Phe-44–Lys-51 is the Nuclear localization signal 1 element. Residues Pro-47 to Lys-59 show a composition bias toward basic residues. 2 stretches are compositionally biased toward basic and acidic residues: residues Glu-80–Pro-95 and Gln-444–Val-466. The Nuclear localization signal 2 motif lies at Asn-441–Asp-448. A compositionally biased stretch (acidic residues) spans Asp-632–Val-645. A compositionally biased stretch (basic and acidic residues) spans Asp-646–Asp-673. 2 stretches are compositionally biased toward acidic residues: residues Asp-688–Glu-699 and Glu-872–Gly-983. Positions Ser-988 to Ser-1000 are enriched in basic residues. Residues Glu-1006 to Thr-1031 are compositionally biased toward basic and acidic residues. Residues Thr-1022 to Glu-1029 carry the Nuclear localization signal 3 motif. Residues Lys-1032 to Glu-1043 show a composition bias toward basic residues.

The protein belongs to the CBF/MAK21 family. In terms of assembly, interacts with RBL in both the nucleolus and nucleoplasm. Binds to NOC2. In terms of tissue distribution, mainly expressed in actively dividing tissues (e.g. root tips, lateral root primordia, shoot apices, young leaves, inflorescences and pollen grains) through the plant, including roots, stems, leaves, inflorescences, siliques and seedlings, and in gametophytes.

It localises to the nucleus. Its subcellular location is the nucleolus. Together with NOC2, probably involved in pre-ribosome export from the nucleus to the cytoplasm. Required for coordinated cell cycle progression during female gametophyte and pollen development. The polypeptide is Protein SLOW WALKER 2 (Arabidopsis thaliana (Mouse-ear cress)).